Here is a 126-residue protein sequence, read N- to C-terminus: Holo-[acyl-carrier-protein] synthase (126 aa).

The Mg(2+) site is built by D8 and E57.

This sequence belongs to the P-Pant transferase superfamily. AcpS family. The cofactor is Mg(2+).

The protein resides in the cytoplasm. It catalyses the reaction apo-[ACP] + CoA = holo-[ACP] + adenosine 3',5'-bisphosphate + H(+). Its function is as follows. Transfers the 4'-phosphopantetheine moiety from coenzyme A to a Ser of acyl-carrier-protein. This is Holo-[acyl-carrier-protein] synthase from Geobacter metallireducens (strain ATCC 53774 / DSM 7210 / GS-15).